A 128-amino-acid chain; its full sequence is Probable 4-amino-4-deoxy-L-arabinose-phosphoundecaprenol flippase subunit ArnF (128 aa).

The Cytoplasmic portion of the chain corresponds to 1–2; sequence MG. Residues 3-23 traverse the membrane as a helical segment; it reads LMWGLFSVIIASVAQLSLGFA. The Periplasmic segment spans residues 24–35; sequence ASHLPPMTHLWD. Residues 36-56 form a helical membrane-spanning segment; that stretch reads FIATLLAFGLDARILLLGLLG. The Cytoplasmic segment spans residues 57–77; sequence YLLSVFCWYKTLHKLALSKAY. A helical transmembrane segment spans residues 78 to 98; sequence ALLSMSYVLVWIASMVLPGWG. Topologically, residues 99 to 100 are periplasmic; sequence GT. The chain crosses the membrane as a helical span at residues 101-121; sequence FSLKALLGVACIMSGLMLIFL. Over 122–128 the chain is Cytoplasmic; it reads PTTKQRY.

This sequence belongs to the ArnF family. In terms of assembly, heterodimer of ArnE and ArnF.

It is found in the cell inner membrane. The protein operates within bacterial outer membrane biogenesis; lipopolysaccharide biosynthesis. Translocates 4-amino-4-deoxy-L-arabinose-phosphoundecaprenol (alpha-L-Ara4N-phosphoundecaprenol) from the cytoplasmic to the periplasmic side of the inner membrane. In Shigella dysenteriae serotype 1 (strain Sd197), this protein is Probable 4-amino-4-deoxy-L-arabinose-phosphoundecaprenol flippase subunit ArnF.